The chain runs to 442 residues: Trigger factor (442 aa).

A PPIase FKBP-type domain is found at 176–259; that stretch reads GDFISLSLYV…VNAVIEISSP (84 aa).

This sequence belongs to the FKBP-type PPIase family. Tig subfamily.

Its subcellular location is the cytoplasm. It catalyses the reaction [protein]-peptidylproline (omega=180) = [protein]-peptidylproline (omega=0). Functionally, involved in protein export. Acts as a chaperone by maintaining the newly synthesized protein in an open conformation. Functions as a peptidyl-prolyl cis-trans isomerase. This Chlamydia trachomatis serovar L2 (strain ATCC VR-902B / DSM 19102 / 434/Bu) protein is Trigger factor.